Reading from the N-terminus, the 80-residue chain is uncharacterized protein (80 aa).

A signal peptide spans 1 to 15; the sequence is MEVIVVIVVIVVVIA. The segment covering 23-44 has biased composition (low complexity); the sequence is NSNSNSNNSSDSSNESNNSDSS. The disordered stretch occupies residues 23–52; that stretch reads NSNSNSNNSSDSSNESNNSDSSKNGGSDIY. 5 N-linked (GlcNAc...) asparagine glycosylation sites follow: Asn29, Asn30, Asn36, Asn39, and Asn64.

Its subcellular location is the secreted. This is an uncharacterized protein from Dictyostelium discoideum (Social amoeba).